The chain runs to 207 residues: ADP-ribose pyrophosphatase (207 aa).

Residues 37-38 (RE) and R64 each bind substrate. The region spanning 41 to 172 (EHFGAVAIVA…EIVNSIAIAG (132 aa)) is the Nudix hydrolase domain. Position 76 (A76) interacts with Mg(2+). The Nudix box motif lies at 77–99 (GLLDVAGEPPHLTAARELREEVG). L78 contacts substrate. Positions 93 and 97 each coordinate Mg(2+). Residues 114 to 116 (APG) and E120 contribute to the substrate site. E142 is a binding site for Mg(2+). E142 functions as the Proton acceptor in the catalytic mechanism.

It belongs to the Nudix hydrolase family. As to quaternary structure, homodimer. Mg(2+) is required as a cofactor. Requires Mn(2+) as cofactor.

It catalyses the reaction ADP-D-ribose + H2O = D-ribose 5-phosphate + AMP + 2 H(+). The enzyme catalyses 8-oxo-dGDP + H2O = 8-oxo-dGMP + phosphate + H(+). The catalysed reaction is 8-oxo-GDP + H2O = 8-oxo-GMP + phosphate + H(+). Catalyzes the hydrolysis of ADP-ribose (ADPR) to AMP and ribose-5-phosphate. Can also hydrolyze ADP-mannose and ADP-glucose, with lower efficiency. Has weaker activity with NAD, GDP-sugars and UDP-sugars. Also catalyzes the conversion of 8-oxo-dGDP to 8-oxo-dGMP, and 8-oxo-GDP to 8-oxo-GMP. Functions in concert with MutT1 to detoxify 8-oxo-dGTP to 8-oxo-dGMP and may play an important role in supporting cellular growth under oxidative stress. The catalytic efficiency is much higher for the hydrolysis of ADPR than 8-oxo-dGTP, suggesting a more relevant biological role in hydrolysis of ADPR. The polypeptide is ADP-ribose pyrophosphatase (Mycobacterium tuberculosis (strain ATCC 25618 / H37Rv)).